Here is a 493-residue protein sequence, read N- to C-terminus: Glutamate--tRNA ligase (493 aa).

The short motif at 10 to 20 is the 'HIGH' region element; it reads PSPTGDPHVGT. A 'KMSKS' region motif is present at residues 251–255; the sequence is KLSKR. An ATP-binding site is contributed by Lys-254.

Belongs to the class-I aminoacyl-tRNA synthetase family. Glutamate--tRNA ligase type 1 subfamily. As to quaternary structure, monomer.

The protein localises to the cytoplasm. The enzyme catalyses tRNA(Glu) + L-glutamate + ATP = L-glutamyl-tRNA(Glu) + AMP + diphosphate. In terms of biological role, catalyzes the attachment of glutamate to tRNA(Glu) in a two-step reaction: glutamate is first activated by ATP to form Glu-AMP and then transferred to the acceptor end of tRNA(Glu). The chain is Glutamate--tRNA ligase from Marinomonas sp. (strain MWYL1).